Here is a 517-residue protein sequence, read N- to C-terminus: Mitochondrial division protein fszA (517 aa).

GTP is bound by residues 60–64, 147–149, E178, R182, and D225; these read GGGCN and GTG. The segment at 496–517 is disordered; the sequence is FTNGNNNKPYNNNKNTPGSNYE. The segment covering 497–517 has biased composition (low complexity); it reads TNGNNNKPYNNNKNTPGSNYE.

It belongs to the FtsZ family.

The protein localises to the mitochondrion matrix. In terms of biological role, probably involved in mitochondrion division process. When overexpressed, induces mitochondrial tubule formation. Binds to and hydrolyzes GTP. The sequence is that of Mitochondrial division protein fszA (fszA) from Dictyostelium discoideum (Social amoeba).